The chain runs to 397 residues: MGKAKFERGKPHVNIGTIGHIDHGKTTLTAAITKIAGLAGNGDYVAFDEIDKAPEEKERGITIATAHVEYETEARHYAHVDCPGHADYIKNMITGAAQMDGAILVVAATDGPMPQTREHILLARQVGVPGIVVFLNKCDMVDDEELLELVEMEVRELLSSYDFPGDDLPVIQGSALKALECESADEDAAKPILDLLAACDSYIEEPERDIDKPFLMPIEDVFSISGRGTVVTGRVERGVIKVGEEVEIVGIRDTAKTTCTGVEMFRKLLDQGQAGDNVGVLLRGTKRDEVERGQVLSAPGSINPHTKFKAEVYVLSKDEGGRHTPFFSGYRPQFYFRTTDITGVVTLDEGVEMVMPGDNATFNVEMINPIAMDPGLRFAIREGGRTVGAGVVTEILE.

Residues 10-207 form the tr-type G domain; the sequence is KPHVNIGTIG…ACDSYIEEPE (198 aa). The G1 stretch occupies residues 19–26; sequence GHIDHGKT. 19-26 provides a ligand contact to GTP; sequence GHIDHGKT. Thr26 contributes to the Mg(2+) binding site. A G2 region spans residues 60 to 64; it reads GITIA. Residues 81-84 are G3; sequence DCPG. GTP-binding positions include 81 to 85 and 136 to 139; these read DCPGH and NKCD. Residues 136–139 form a G4 region; that stretch reads NKCD. Residues 174–176 form a G5 region; that stretch reads SAL.

The protein belongs to the TRAFAC class translation factor GTPase superfamily. Classic translation factor GTPase family. EF-Tu/EF-1A subfamily. Monomer.

It is found in the cytoplasm. It carries out the reaction GTP + H2O = GDP + phosphate + H(+). GTP hydrolase that promotes the GTP-dependent binding of aminoacyl-tRNA to the A-site of ribosomes during protein biosynthesis. In Maridesulfovibrio salexigens (strain ATCC 14822 / DSM 2638 / NCIMB 8403 / VKM B-1763) (Desulfovibrio salexigens), this protein is Elongation factor Tu.